Here is a 55-residue protein sequence, read N- to C-terminus: DNA-directed RNA polymerase subunit Rpo10 (55 aa).

Residues C6, C9, C43, and C44 each coordinate Zn(2+).

It belongs to the archaeal Rpo10/eukaryotic RPB10 RNA polymerase subunit family. In terms of assembly, part of the RNA polymerase complex. The cofactor is Zn(2+).

It is found in the cytoplasm. The catalysed reaction is RNA(n) + a ribonucleoside 5'-triphosphate = RNA(n+1) + diphosphate. Its function is as follows. DNA-dependent RNA polymerase (RNAP) catalyzes the transcription of DNA into RNA using the four ribonucleoside triphosphates as substrates. In Methanothermobacter thermautotrophicus (strain ATCC 29096 / DSM 1053 / JCM 10044 / NBRC 100330 / Delta H) (Methanobacterium thermoautotrophicum), this protein is DNA-directed RNA polymerase subunit Rpo10.